The sequence spans 318 residues: 2-keto-3-deoxygluconate permease (318 aa).

Helical transmembrane passes span 10–30 (IPGG…TFTP), 42–62 (GLIT…GASI), 76–96 (VLVV…GAFL), 105–125 (LLAG…NGGL), 139–159 (AGAF…VILG), 162–182 (GIAT…LIGF), 199–219 (VQTL…LSVI), 224–244 (FAGI…LILA), 254–274 (TAGI…LLIA), and 289–309 (ALVA…TALW).

The protein belongs to the KdgT transporter family.

The protein resides in the cell inner membrane. It carries out the reaction 2-dehydro-3-deoxy-D-gluconate(in) + H(+)(in) = 2-dehydro-3-deoxy-D-gluconate(out) + H(+)(out). In terms of biological role, catalyzes the proton-dependent uptake of 2-keto-3-deoxygluconate (KDG) into the cell. The polypeptide is 2-keto-3-deoxygluconate permease (Pectobacterium atrosepticum (strain SCRI 1043 / ATCC BAA-672) (Erwinia carotovora subsp. atroseptica)).